Consider the following 239-residue polypeptide: Ribonuclease PH (239 aa).

Residues R86 and 124–126 each bind phosphate; that span reads GTR.

Belongs to the RNase PH family. In terms of assembly, homohexameric ring arranged as a trimer of dimers.

The catalysed reaction is tRNA(n+1) + phosphate = tRNA(n) + a ribonucleoside 5'-diphosphate. Its function is as follows. Phosphorolytic 3'-5' exoribonuclease that plays an important role in tRNA 3'-end maturation. Removes nucleotide residues following the 3'-CCA terminus of tRNAs; can also add nucleotides to the ends of RNA molecules by using nucleoside diphosphates as substrates, but this may not be physiologically important. Probably plays a role in initiation of 16S rRNA degradation (leading to ribosome degradation) during starvation. The protein is Ribonuclease PH of Rickettsia bellii (strain RML369-C).